A 555-amino-acid polypeptide reads, in one-letter code: Poly(A) polymerase PAPa (555 aa).

Positions 1-20 are disordered; that stretch reads MNNQAYGVTPPISVANSTPK. ATP contacts are provided by residues 86–88, 99–101, Asp-153, Lys-214, Tyr-223, and 232–233; these read FGS, DID, and GV. Mg(2+) is bound by residues Asp-99, Asp-101, and Asp-153. Residues 532-555 are disordered; it reads KRKRAVSKNEGKKKPKSVGTVSAA.

The protein belongs to the poly(A) polymerase family. The cofactor is Mg(2+). It depends on Mn(2+) as a cofactor.

Its subcellular location is the nucleus. It catalyses the reaction RNA(n) + ATP = RNA(n)-3'-adenine ribonucleotide + diphosphate. In terms of biological role, polymerase that creates the 3'-poly(A) tail of mRNA's. May acquire specificity through interaction with a cleavage and polyadenylation factor. This is Poly(A) polymerase PAPa (PAPA) from Candida albicans (strain SC5314 / ATCC MYA-2876) (Yeast).